The chain runs to 175 residues: Gamma-crystallin-1 (175 aa).

Beta/gamma crystallin 'Greek key' domains lie at 2-40 and 41-83; these read GKIF…RVEG and GNWI…RFLP. The interval 84–88 is connecting peptide; sequence NYQGQ. 2 Beta/gamma crystallin 'Greek key' domains span residues 89-129 and 130-172; these read YKMR…NVFD and GHWM…RRVY.

The protein belongs to the beta/gamma-crystallin family. Monomer.

Crystallins are the dominant structural components of the vertebrate eye lens. The polypeptide is Gamma-crystallin-1 (cryg1) (Xenopus laevis (African clawed frog)).